The primary structure comprises 184 residues: Rhox homeobox family member 1 (184 aa).

A disordered region spans residues 26–104 (QLGAASSAEG…GPQPENMQPR (79 aa)). A compositionally biased stretch (low complexity) spans 88-99 (PAQAAMEGPQPE). A DNA-binding region (homeobox) is located at residues 103-162 (PRTRRTKFTLLQVEELESVFRHTQYPDVPTRRELAENLGVTEDKVRVWFKNKRARCRRHQ). Positions 155–164 (RARCRRHQRE) match the Nuclear localization signal motif.

The protein belongs to the paired-like homeobox family. PEPP subfamily. In terms of assembly, does not interact with itself. Ovary, testis and epididymis. Also detected in the prostate and the mammary gland. Expressed in many tumor cell lines derived from acute lymphocytic leukemia, prostate, endometrial adenocarcinoma, melanoma, bladder carcinoma, colon carcinoma, erythroleukemia and breast carcinoma. Not expressed in placenta. In testis, mainly expressed in germ cells, but also detected in somatic cells such as Sertoli cells, Leydig cells and peritubular cells.

The protein localises to the nucleus. Its function is as follows. Transcription factor maybe involved in reproductive processes. Modulates expression of target genes encoding proteins involved in processes relevant to spermatogenesis. In Homo sapiens (Human), this protein is Rhox homeobox family member 1.